We begin with the raw amino-acid sequence, 158 residues long: Ribosome maturation factor RimP (158 aa).

It belongs to the RimP family.

It is found in the cytoplasm. In terms of biological role, required for maturation of 30S ribosomal subunits. The protein is Ribosome maturation factor RimP of Leuconostoc mesenteroides subsp. mesenteroides (strain ATCC 8293 / DSM 20343 / BCRC 11652 / CCM 1803 / JCM 6124 / NCDO 523 / NBRC 100496 / NCIMB 8023 / NCTC 12954 / NRRL B-1118 / 37Y).